We begin with the raw amino-acid sequence, 425 residues long: Trigger factor (425 aa).

The region spanning 163 to 248 (GDTAVIDFEG…VHEIKTKELP (86 aa)) is the PPIase FKBP-type domain.

The protein belongs to the FKBP-type PPIase family. Tig subfamily.

The protein resides in the cytoplasm. The catalysed reaction is [protein]-peptidylproline (omega=180) = [protein]-peptidylproline (omega=0). In terms of biological role, involved in protein export. Acts as a chaperone by maintaining the newly synthesized protein in an open conformation. Functions as a peptidyl-prolyl cis-trans isomerase. This Bacillus cereus (strain Q1) protein is Trigger factor.